The following is a 414-amino-acid chain: WW domain-containing oxidoreductase (414 aa).

The tract at residues 1-23 is disordered; it reads MAALKYAGLEDTDSEEELPPGWE. The WW 1 domain maps to 16–49; sequence EELPPGWEERTTKDGWVYYANHLEEKTQWEHPKS. The Nuclear localization signal motif lies at 50–55; the sequence is GKRKRV. A WW 2 domain is found at 57–90; it reads GGLPYGWEQETDENGQVYFVDHINKRTTYLDPRL. NADP(+) is bound at residue 131 to 137; the sequence is GANSGIG. Residue S260 coordinates substrate. Y293 acts as the Proton acceptor in catalysis.

This sequence belongs to the short-chain dehydrogenases/reductases (SDR) family.

It is found in the cytoplasm. It localises to the mitochondrion. Its subcellular location is the golgi apparatus. The protein localises to the lysosome. In terms of biological role, putative oxidoreductase. Acts as a tumor suppressor and plays a role in apoptosis. May function synergistically with p53/TP53 to control genotoxic stress-induced cell death. Plays a role in TGFB1 signaling and TGFB1-mediated cell death. May also play a role in tumor necrosis factor (TNF)-mediated cell death. Required for normal bone development. Inhibits Wnt signaling. This is WW domain-containing oxidoreductase (WWOX) from Gallus gallus (Chicken).